The primary structure comprises 145 residues: Large ribosomal subunit protein uL13 (145 aa).

The interval 72 to 91 (DKMYHRHSNHPGGLKSISAG) is disordered.

Belongs to the universal ribosomal protein uL13 family. As to quaternary structure, part of the 50S ribosomal subunit.

This protein is one of the early assembly proteins of the 50S ribosomal subunit, although it is not seen to bind rRNA by itself. It is important during the early stages of 50S assembly. The polypeptide is Large ribosomal subunit protein uL13 (Staphylococcus epidermidis (strain ATCC 12228 / FDA PCI 1200)).